The chain runs to 87 residues: Cell division topological specificity factor (87 aa).

This sequence belongs to the MinE family.

Functionally, prevents the cell division inhibition by proteins MinC and MinD at internal division sites while permitting inhibition at polar sites. This ensures cell division at the proper site by restricting the formation of a division septum at the midpoint of the long axis of the cell. This is Cell division topological specificity factor from Chelativorans sp. (strain BNC1).